A 201-amino-acid polypeptide reads, in one-letter code: Testis-expressed protein 38 (201 aa).

A helical membrane pass occupies residues 3-23 (ISLCIGFLGLCSVLIGSCILF).

The protein resides in the membrane. The protein is Testis-expressed protein 38 (Tex38) of Mus musculus (Mouse).